Reading from the N-terminus, the 770-residue chain is Cyclopiane-type diterpene synthase (770 aa).

The segment at 5–335 (ITDEYAVGID…VPRYCKVDRN (331 aa)) is terpene cyclase. Mg(2+) is bound by residues Asp-97 and Asp-101. Residues Asp-97, Asp-101, 190–193 (RIVD), Asn-234, 238–242 (SWDKE), and 328–329 (RY) contribute to the substrate site. Positions 97–101 (DDETD) match the DDXXD 1 motif. The NSE/DTE signature appears at 234–242 (NDLFSWDKE). The segment at 336–720 (PYKDHLEKYG…WALRLLIMKL (385 aa)) is prenyltransferase. Positions 371–397 (NQLKEPSSSTYKTHFSPLEPNPGPEQT) are disordered. The segment covering 374–383 (KEPSSSTYKT) has biased composition (polar residues). Residues Lys-423, Arg-426, and His-455 each coordinate isopentenyl diphosphate. Asp-462 and Asp-466 together coordinate Mg(2+). Residues 462–466 (DDIQD) carry the DDXXD 2 motif. Arg-471 contacts dimethylallyl diphosphate. Arg-472 is a binding site for isopentenyl diphosphate. Residues Lys-548, Thr-549, Gln-584, Asn-591, Lys-620, and Lys-630 each coordinate dimethylallyl diphosphate.

In the N-terminal section; belongs to the terpene synthase family. It in the C-terminal section; belongs to the FPP/GGPP synthase family. In terms of assembly, hexamer. Mg(2+) is required as a cofactor.

It catalyses the reaction isopentenyl diphosphate + (2E,6E)-farnesyl diphosphate = (2E,6E,10E)-geranylgeranyl diphosphate + diphosphate. The enzyme catalyses (2E,6E,10E)-geranylgeranyl diphosphate + H2O = (+)-penichrysol + diphosphate. The protein operates within secondary metabolite biosynthesis; terpenoid biosynthesis. Its function is as follows. Bifunctional terpene synthase converts dimethylallyl diphosphate (DMAPP) and isopentenyl diphosphate (IPP) into a cyclopiane-type diterpene. The C-terminal prenyltransferase (PT) domain of PcCS catalyzes formation of geranylgeranyl pyrophosphate (GGPP), whereas the N-terminal terpene cyclase (TC) domain catalyzes the cyclization of GGPP to the cyclopiane-type diterpene penichrysol. The sequence is that of Cyclopiane-type diterpene synthase from Penicillium chrysogenum (Penicillium notatum).